Here is a 291-residue protein sequence, read N- to C-terminus: Cilia- and flagella-associated protein 298 (291 aa).

Belongs to the CFAP298 family.

This Drosophila melanogaster (Fruit fly) protein is Cilia- and flagella-associated protein 298.